The chain runs to 88 residues: uncharacterized protein (88 aa).

This is an uncharacterized protein from Orgyia pseudotsugata (Douglas-fir tussock moth).